Consider the following 148-residue polypeptide: Ribonuclease H (148 aa).

Residues 3-144 enclose the RNase H type-1 domain; the sequence is AEETVEIFTD…ADALANRGIE (142 aa). Mg(2+)-binding residues include Asp12, Glu50, Asp72, and Asp136. The tract at residues 129–148 is disordered; the sequence is HPENERADALANRGIEELKG.

It belongs to the RNase H family. Monomer. Requires Mg(2+) as cofactor.

The protein localises to the cytoplasm. It carries out the reaction Endonucleolytic cleavage to 5'-phosphomonoester.. Endonuclease that specifically degrades the RNA of RNA-DNA hybrids. The chain is Ribonuclease H from Dechloromonas aromatica (strain RCB).